A 445-amino-acid polypeptide reads, in one-letter code: ATPase PAAT (445 aa).

4 positions are modified to phosphoserine: Ser177, Ser182, Ser254, and Ser302. The disordered stretch occupies residues Pro426–Arg445. Over residues Arg432 to Arg445 the composition is skewed to basic and acidic residues.

In terms of assembly, homodimer. Interacts with ABCB7, ABCB8/MITOSUR and ABCB10.

It localises to the cytoplasm. It is found in the mitochondrion. The catalysed reaction is ATP + H2O = ADP + phosphate + H(+). Its function is as follows. ATPase that regulates mitochondrial ABC transporters ABCB7, ABCB8/MITOSUR and ABCB10. Regulates mitochondrial ferric concentration and heme biosynthesis and plays a role in the maintenance of mitochondrial homeostasis and cell survival. This Homo sapiens (Human) protein is ATPase PAAT.